The sequence spans 189 residues: UPF0316 protein Sca_1484 (189 aa).

Transmembrane regions (helical) follow at residues 8 to 28 (PWLM…CLTV), 40 to 60 (VAAA…GLVM), and 66 to 86 (FQNI…GMKI).

The protein belongs to the UPF0316 family.

Its subcellular location is the cell membrane. The sequence is that of UPF0316 protein Sca_1484 from Staphylococcus carnosus (strain TM300).